A 261-amino-acid polypeptide reads, in one-letter code: General secretion pathway protein N (261 aa).

At 1 to 10 (MRLEMIGLRT) the chain is on the cytoplasmic side. A helical membrane pass occupies residues 11–31 (WLLATVVGWALLVCVLAVAGL). Topologically, residues 32–261 (GKRVELLPDD…QGGSTPGQTQ (230 aa)) are periplasmic. The segment at 158 to 261 (VFNGQGGQPP…QGGSTPGQTQ (104 aa)) is disordered. Residues 179 to 200 (AVPPLPPNVPPAPATPAPPPAE) are compositionally biased toward pro residues. The segment covering 201–211 (VPQQQPGGQAP) has biased composition (low complexity). Residues 227 to 244 (RPSDEQMRAIRERIEARR) are compositionally biased toward basic and acidic residues.

In terms of assembly, binds to XpsD.

It localises to the cell inner membrane. Functionally, involved in a general secretion pathway (GSP) for the export of proteins. The polypeptide is General secretion pathway protein N (xpsN) (Xanthomonas campestris pv. campestris (strain ATCC 33913 / DSM 3586 / NCPPB 528 / LMG 568 / P 25)).